Here is a 170-residue protein sequence, read N- to C-terminus: Transcription factor E (170 aa).

The region spanning 1–93 is the HTH TFE/IIEalpha-type domain; that stretch reads MKEAYLYIVE…TWYVDDEIIR (93 aa).

It belongs to the TFE family. In terms of assembly, monomer. Interaction with RNA polymerase subunits RpoF and RpoE is necessary for Tfe stimulatory transcription activity. Able to interact with Tbp and RNA polymerase in the absence of DNA promoter. Interacts both with the preinitiation and elongation complexes.

Transcription factor that plays a role in the activation of archaeal genes transcribed by RNA polymerase. Facilitates transcription initiation by enhancing TATA-box recognition by TATA-box-binding protein (Tbp), and transcription factor B (Tfb) and RNA polymerase recruitment. Not absolutely required for transcription in vitro, but particularly important in cases where Tbp or Tfb function is not optimal. It dynamically alters the nucleic acid-binding properties of RNA polymerases by stabilizing the initiation complex and destabilizing elongation complexes. Seems to translocate with the RNA polymerase following initiation and acts by binding to the non template strand of the transcription bubble in elongation complexes. In Pyrobaculum islandicum (strain DSM 4184 / JCM 9189 / GEO3), this protein is Transcription factor E.